Consider the following 538-residue polypeptide: Sucrose transport protein SUT1 (538 aa).

Over 1-52 (MARGSGAGGGGGGGGGGLELSVGVGGGGGARGGGGGEAAAAVETAAPISLGR) the chain is Cytoplasmic. Residues 53 to 73 (LILSGMVAGGVQYGWALQLSL) traverse the membrane as a helical segment. Residues 74-81 (LTPYVQTL) are Extracellular-facing. Residues 82–102 (GLSHALTSFMWLCGPIAGMVV) traverse the membrane as a helical segment. Residues 103–123 (QPCVGLYSDRCTSKWGRRRPY) lie on the Cytoplasmic side of the membrane. A helical membrane pass occupies residues 124 to 144 (ILTGCVLICLAVVVIGFSADI). Over 145 to 162 (GYAMGDTKEDCSVYHGSR) the chain is Extracellular. A helical transmembrane segment spans residues 163 to 183 (WHAAIVYVLGFWLLDFSNNTV). At 184–198 (QGPARALMADLSGRH) the chain is on the cytoplasmic side. A helical transmembrane segment spans residues 199–219 (GPGTANSIFCSWMAMGNILGY). Topologically, residues 220 to 247 (SSGSTNNWHKWFPFLKTRACCEACANLK) are extracellular. Residues 248–268 (GAFLVAVIFLSLCLVITLIFA) traverse the membrane as a helical segment. At 269–306 (KEVPFKGNAALPTKSNEPAEPEGTGPLAVLKGFRNLPT) the chain is on the cytoplasmic side. The chain crosses the membrane as a helical span at residues 307-327 (GMPSVLIVTGLTWLSWFPFIL). Topologically, residues 328–357 (YDTDWMGREIYHGDPKGTDPQIEAFNQGVR) are extracellular. A helical membrane pass occupies residues 358–378 (AGAFGLLLNSIVLGFSSFLIE). Over 379–388 (PMCRKVGPRV) the chain is Cytoplasmic. A helical membrane pass occupies residues 389–409 (VWVTSNFLVCIAMAATALISF). At 410-433 (WSLKDFHGTVQKAITADKSIKAVC) the chain is on the extracellular side. Residues 434 to 454 (LVLFAFLGVPLAVLYSVPFAV) traverse the membrane as a helical segment. Over 455 to 470 (TAQLAATRGGGQGLCT) the chain is Cytoplasmic. A helical membrane pass occupies residues 471 to 491 (GVLNISIVIPQVVIALGAGPW). The Extracellular segment spans residues 492 to 499 (DELFGKGN). Residues 500 to 520 (IPAFGLASGFALIGGVAGIFL) traverse the membrane as a helical segment. Over 521–538 (LPKISKRQFRSVSMGGGH) the chain is Cytoplasmic.

The protein belongs to the glycoside-pentoside-hexuronide (GPH) cation symporter transporter (TC 2.A.2.4) family. Homodimer.

It is found in the cell membrane. It functions in the pathway glycan biosynthesis; sucrose metabolism. In terms of biological role, responsible for the transport of sucrose into the cell, with the concomitant uptake of protons (symport system). May also transport other glucosides. May be required for apoplastic phloem sucrose loading in source tissues (e.g. leaves) in order to transport it to sink tissues (e.g. roots, flowers). This chain is Sucrose transport protein SUT1 (SUT1), found in Oryza sativa subsp. indica (Rice).